An 850-amino-acid polypeptide reads, in one-letter code: Mitochondrial escape protein 2 (850 aa).

The N-terminal 44 residues, 1-44 (MLLVRTTSLNVSRMPVPCLARGIGILKGKYRLANLMNAQPSVRH), are a transit peptide targeting the mitochondrion. The tract at residues 44 to 66 (HVSSEIQQKDQQAGESNTATDTG) is disordered. At 45 to 287 (VSSEIQQKDQ…VSNFFTNHTR (243 aa)) the chain is on the mitochondrial matrix side. Positions 47 to 64 (SEIQQKDQQAGESNTATD) are enriched in polar residues. The 75-residue stretch at 198–272 (TTIVIKFQGP…TVLHIQYENI (75 aa)) folds into the RRM domain. The chain crosses the membrane as a helical span at residues 288–308 (IAIPVLFALLSIFAVLVFDPI). Topologically, residues 309 to 850 (REFSIEQKIT…CEEEIKNLSK (542 aa)) are mitochondrial intermembrane. Basic and acidic residues predominate over residues 607–621 (KGENVKEPESEKEIA). Residues 607-633 (KGENVKEPESEKEIAENNDSDSEADTS) form a disordered region.

It belongs to the YME2 family.

It is found in the mitochondrion inner membrane. In terms of biological role, plays a role in maintaining the mitochondrial genome and in controlling the mtDNA escape. Involved in the regulation of mtDNA nucleotide structure and number. May have a dispensable role in early maturation of pre-rRNA. The protein is Mitochondrial escape protein 2 (YME2) of Saccharomyces cerevisiae (strain YJM789) (Baker's yeast).